The chain runs to 1257 residues: Neurocan core protein (1257 aa).

A signal peptide spans 1–22 (MGAESVWASGLLVLWLLLLVSG). Positions 37–157 (HMLKSGSGPI…EQDLVTLEVT (121 aa)) constitute an Ig-like V-type domain. 5 disulfide bridges follow: Cys-58–Cys-139, Cys-181–Cys-252, Cys-205–Cys-226, Cys-279–Cys-354, and Cys-303–Cys-324. The N-linked (GlcNAc...) asparagine glycan is linked to Asn-121. Link domains lie at 159-254 (VVFH…YCFA) and 258-356 (GGEV…YCFR). Asn-339 carries an N-linked (GlcNAc...) asparagine glycan. The tract at residues 361-391 (TPQRGDSEIPSSGDEGEIVSAEGPPAPELKP) is disordered. 2 O-linked (Xyl...) (chondroitin sulfate) serine glycosylation sites follow: Ser-380 and Ser-410. Positions 447–459 (SSTGVPSPSSLGV) are enriched in low complexity. 3 disordered regions span residues 447-493 (SSTG…FQQQ), 550-610 (GSLG…AVPS), and 683-707 (GAEDPETPFQTTMAAPGEASHGSPE). A compositionally biased stretch (polar residues) spans 464–473 (TTPSGTQVAP). Over residues 569–580 (SPSTVPSTDSTP) the composition is skewed to low complexity. An N-linked (GlcNAc...) asparagine glycan is attached at Asn-737. Ser-944 is a glycosylation site (O-linked (Xyl...) (chondroitin sulfate) serine). The EGF-like 1 domain occupies 949–985 (PTDPCENNPCLHGGTCRTNGTMYGCSCDQGYAGENCE). Disulfide bonds link Cys-953–Cys-964, Cys-958–Cys-973, Cys-975–Cys-984, Cys-991–Cys-1002, Cys-996–Cys-1011, Cys-1013–Cys-1022, Cys-1029–Cys-1040, Cys-1057–Cys-1149, Cys-1125–Cys-1141, Cys-1156–Cys-1199, and Cys-1185–Cys-1212. N-linked (GlcNAc...) asparagine glycosylation occurs at Asn-967. Residues 987-1023 (DIDDCLCSPCENGGTCIDEVNGFICLCLPSYGGNLCE) form the EGF-like 2; calcium-binding domain. The region spanning 1025–1154 (DTEGCDRGWH…LPYVCKKGTV (130 aa)) is the C-type lectin domain. Positions 1154–1214 (VLCGPPPAVE…WDRPQIVCTK (61 aa)) constitute a Sushi domain. N-linked (GlcNAc...) asparagine glycosylation is present at Asn-1164. Over residues 1215–1244 (PRRSHRMRRHHHHPHRHHKPRKEHRKHKRH) the composition is skewed to basic residues. Positions 1215–1257 (PRRSHRMRRHHHHPHRHHKPRKEHRKHKRHPAEDWEKDEGDFC) are disordered.

Belongs to the aggrecan/versican proteoglycan family. Two isoforms were found that probably arise by proteolytic processing. The large isoform is predominant in early postnatal brain, the small isoform is found in adult brain. Post-translationally, O-glycosylated; contains chondroitin sulfate. In terms of tissue distribution, early postnatal and adult brain; not expressed in kidney, lung, liver and muscle.

It localises to the secreted. May modulate neuronal adhesion and neurite growth during development by binding to neural cell adhesion molecules (NG-CAM and N-CAM). Chondroitin sulfate proteoglycan; binds to hyaluronic acid. This Rattus norvegicus (Rat) protein is Neurocan core protein (Ncan).